Reading from the N-terminus, the 341-residue chain is L-threonine 3-dehydrogenase (341 aa).

C38 contributes to the Zn(2+) binding site. Residues T40 and H43 each act as charge relay system in the active site. Positions 63, 64, 93, 96, 99, and 107 each coordinate Zn(2+). Residues I175, D195, R200, 262–264, and 286–287 contribute to the NAD(+) site; these read LGI and IY.

It belongs to the zinc-containing alcohol dehydrogenase family. As to quaternary structure, homotetramer. The cofactor is Zn(2+).

The protein localises to the cytoplasm. It catalyses the reaction L-threonine + NAD(+) = (2S)-2-amino-3-oxobutanoate + NADH + H(+). It functions in the pathway amino-acid degradation; L-threonine degradation via oxydo-reductase pathway; glycine from L-threonine: step 1/2. Functionally, catalyzes the NAD(+)-dependent oxidation of L-threonine to 2-amino-3-ketobutyrate. The sequence is that of L-threonine 3-dehydrogenase from Chromobacterium violaceum (strain ATCC 12472 / DSM 30191 / JCM 1249 / CCUG 213 / NBRC 12614 / NCIMB 9131 / NCTC 9757 / MK).